The following is a 246-amino-acid chain: Ribonuclease PH (246 aa).

Positions 1 to 33 (MTPPKLPVREGRDALTPRPVSVQRGVNPHAPGS) are disordered. Phosphate contacts are provided by residues R90 and 128-130 (GTR).

It belongs to the RNase PH family. As to quaternary structure, homohexameric ring arranged as a trimer of dimers.

It carries out the reaction tRNA(n+1) + phosphate = tRNA(n) + a ribonucleoside 5'-diphosphate. Its function is as follows. Phosphorolytic 3'-5' exoribonuclease that plays an important role in tRNA 3'-end maturation. Removes nucleotide residues following the 3'-CCA terminus of tRNAs; can also add nucleotides to the ends of RNA molecules by using nucleoside diphosphates as substrates, but this may not be physiologically important. Probably plays a role in initiation of 16S rRNA degradation (leading to ribosome degradation) during starvation. The chain is Ribonuclease PH from Deinococcus radiodurans (strain ATCC 13939 / DSM 20539 / JCM 16871 / CCUG 27074 / LMG 4051 / NBRC 15346 / NCIMB 9279 / VKM B-1422 / R1).